Here is an 86-residue protein sequence, read N- to C-terminus: Protein K3 homolog (86 aa).

The 72-residue stretch at 15-86 (NINDITQGII…LKGYIDVSIV (72 aa)) folds into the S1 motif domain.

The protein belongs to the poxviridae K3 protein family. As to quaternary structure, interacts with host PKR kinase.

Its function is as follows. Viral mimic of eIF-2-alpha that acts as a pseudosubstrate for EIF2AK2/PKR kinase. Inhibits therefore eIF-2-alpha phosphorylation by host EIF2AK2/PKR kinase and prevents protein synthesis shutoff. The chain is Protein K3 homolog from Sus scrofa (Pig).